The sequence spans 591 residues: V-type ATP synthase alpha chain (591 aa).

Glycine 233–threonine 240 provides a ligand contact to ATP.

It belongs to the ATPase alpha/beta chains family.

The enzyme catalyses ATP + H2O + 4 H(+)(in) = ADP + phosphate + 5 H(+)(out). Functionally, produces ATP from ADP in the presence of a proton gradient across the membrane. The V-type alpha chain is a catalytic subunit. The sequence is that of V-type ATP synthase alpha chain from Streptococcus pyogenes serotype M1.